A 519-amino-acid chain; its full sequence is Protein tweety homolog 1 (519 aa).

Topologically, residues M1–L42 are extracellular. Residues V43–I63 traverse the membrane as a helical segment. Residues C64–R82 lie on the Cytoplasmic side of the membrane. Residues L83–F103 form a helical membrane-spanning segment. The Extracellular portion of the chain corresponds to A104–W217. N142, N163, and N176 each carry an N-linked (GlcNAc...) asparagine glycan. A helical transmembrane segment spans residues A218–F238. Residues C239–G245 lie on the Cytoplasmic side of the membrane. A helical membrane pass occupies residues A246–I266. Residues S267–M395 are Extracellular-facing. N328, N341, N348, and N389 each carry an N-linked (GlcNAc...) asparagine glycan. A helical transmembrane segment spans residues S396 to V416. Over S417–M519 the chain is Cytoplasmic. The disordered stretch occupies residues Y459–L485.

This sequence belongs to the tweety family.

The protein localises to the cell membrane. Its function is as follows. Probable chloride channel. This chain is Protein tweety homolog 1 (ttyh-1), found in Caenorhabditis elegans.